Reading from the N-terminus, the 413-residue chain is Putative competence-damage inducible protein (413 aa).

Belongs to the CinA family.

This chain is Putative competence-damage inducible protein, found in Thermoanaerobacter pseudethanolicus (strain ATCC 33223 / 39E) (Clostridium thermohydrosulfuricum).